The sequence spans 139 residues: MNTVCTHCQAINRIPDDRIEDAAKCGRCGHDLFDGEVINATGETLDKLLKDDLPVVIDFWAPWCGPCRNFAPIFEDVAQERSGKVRFVKVNTEAERELSSRFGIRSIPTIMIFKNGQVVDMLNGAVPKAPFDSWLNESL.

Residues 5 to 18 fold into a zinc finger; sequence CTHCQAINRIPDDR. One can recognise a Thioredoxin domain in the interval 26 to 139; that stretch reads GRCGHDLFDG…PFDSWLNESL (114 aa). A disulfide bridge connects residues C64 and C67.

The protein belongs to the thioredoxin family.

It is found in the cytoplasm. The enzyme catalyses [protein]-dithiol + NAD(+) = [protein]-disulfide + NADH + H(+). It carries out the reaction [protein]-dithiol + NADP(+) = [protein]-disulfide + NADPH + H(+). Functionally, efficient electron donor for the essential enzyme ribonucleotide reductase. Is also able to reduce the interchain disulfide bridges of insulin. The chain is Thioredoxin 2 (trxC) from Escherichia coli O6:H1 (strain CFT073 / ATCC 700928 / UPEC).